A 154-amino-acid polypeptide reads, in one-letter code: Large-conductance mechanosensitive channel (154 aa).

The next 3 helical transmembrane spans lie at valine 16–valine 36, aspartate 39–isoleucine 59, and glycine 89–methionine 109.

The protein belongs to the MscL family. Homopentamer.

Its subcellular location is the cell inner membrane. Its function is as follows. Channel that opens in response to stretch forces in the membrane lipid bilayer. May participate in the regulation of osmotic pressure changes within the cell. The chain is Large-conductance mechanosensitive channel from Zymomonas mobilis subsp. mobilis (strain ATCC 31821 / ZM4 / CP4).